We begin with the raw amino-acid sequence, 652 residues long: Probable potassium transport system protein Kup (652 aa).

Positions methionine 1 to serine 20 are enriched in low complexity. A disordered region spans residues methionine 1–histidine 26. 12 consecutive transmembrane segments (helical) span residues leucine 36–leucine 56, leucine 76–isoleucine 96, tryptophan 125–proline 145, proline 161–isoleucine 181, phenylalanine 193–isoleucine 213, alanine 228–leucine 248, leucine 270–leucine 290, leucine 314–phenylalanine 334, isoleucine 362–phenylalanine 382, alanine 391–valine 411, alanine 419–serine 439, and isoleucine 444–threonine 464.

This sequence belongs to the HAK/KUP transporter (TC 2.A.72) family.

The protein localises to the cell inner membrane. It catalyses the reaction K(+)(in) + H(+)(in) = K(+)(out) + H(+)(out). Transport of potassium into the cell. Likely operates as a K(+):H(+) symporter. This Zymomonas mobilis subsp. mobilis (strain ATCC 31821 / ZM4 / CP4) protein is Probable potassium transport system protein Kup.